Here is a 116-residue protein sequence, read N- to C-terminus: UPF0134 protein MPN_038 (116 aa).

This sequence belongs to the UPF0134 family.

The protein is UPF0134 protein MPN_038 of Mycoplasma pneumoniae (strain ATCC 29342 / M129 / Subtype 1) (Mycoplasmoides pneumoniae).